The primary structure comprises 422 residues: Trichothecene biosynthesis transcription regulator TRI10 (422 aa).

This sequence belongs to the TRI10 transcription regulator family.

It localises to the nucleus. In terms of biological role, transcriptional activator of all of the trichothecene biosynthesis genes. Acts upstream of the cluster-encoded transcription factor TRI6 and is necessary for full expression of both the other trichothecene genes and the genes for the primary metabolic pathway that precedes the trichothecene biosynthetic pathway. The sequence is that of Trichothecene biosynthesis transcription regulator TRI10 from Trichoderma arundinaceum.